A 284-amino-acid polypeptide reads, in one-letter code: Phosphatidylglycerol--prolipoprotein diacylglyceryl transferase (284 aa).

The next 7 membrane-spanning stretches (helical) occupy residues 14 to 34 (IAFS…ACAI), 62 to 82 (YFLW…ILIY), 106 to 126 (FVGI…IASY), 136 to 156 (LLIY…FGRI), 190 to 210 (PSQL…VLWA), 218 to 238 (GLLI…AEFY), and 252 to 272 (LSMG…ILLY). Arginine 155 is a binding site for a 1,2-diacyl-sn-glycero-3-phospho-(1'-sn-glycerol).

The protein belongs to the Lgt family.

It localises to the cell inner membrane. It carries out the reaction L-cysteinyl-[prolipoprotein] + a 1,2-diacyl-sn-glycero-3-phospho-(1'-sn-glycerol) = an S-1,2-diacyl-sn-glyceryl-L-cysteinyl-[prolipoprotein] + sn-glycerol 1-phosphate + H(+). Its pathway is protein modification; lipoprotein biosynthesis (diacylglyceryl transfer). Its function is as follows. Catalyzes the transfer of the diacylglyceryl group from phosphatidylglycerol to the sulfhydryl group of the N-terminal cysteine of a prolipoprotein, the first step in the formation of mature lipoproteins. The sequence is that of Phosphatidylglycerol--prolipoprotein diacylglyceryl transferase from Helicobacter pylori (strain Shi470).